Consider the following 274-residue polypeptide: Putative deoxyribonuclease TATDN1 homolog (274 aa).

4 residues coordinate a divalent metal cation: Glu-105, His-139, His-162, and Asp-208.

The protein belongs to the metallo-dependent hydrolases superfamily. TatD-type hydrolase family. The cofactor is a divalent metal cation.

The protein resides in the nucleus. Functionally, putative deoxyribonuclease. The chain is Putative deoxyribonuclease TATDN1 homolog from Enterocytozoon bieneusi (strain H348) (Microsporidian parasite).